The sequence spans 116 residues: MDKKTSRLRRATRARKKIQELGVNRLVVHRTPRHTYAQVISPDSQVLAAASTAEKAVTEQLKYTGNVDAAKAVGKTVAERAIEKGVTVVAFDRSGFKYHGRVAALADAAREAGLKF.

It belongs to the universal ribosomal protein uL18 family. Part of the 50S ribosomal subunit; part of the 5S rRNA/L5/L18/L25 subcomplex. Contacts the 5S and 23S rRNAs.

In terms of biological role, this is one of the proteins that bind and probably mediate the attachment of the 5S RNA into the large ribosomal subunit, where it forms part of the central protuberance. This Shewanella sediminis (strain HAW-EB3) protein is Large ribosomal subunit protein uL18.